Consider the following 213-residue polypeptide: Uracil phosphoribosyltransferase (213 aa).

5-phospho-alpha-D-ribose 1-diphosphate is bound by residues Arg-78, Arg-103, and 131–139 (DPMLATGGT). Uracil is bound by residues Ile-197 and 202–204 (GDA). 5-phospho-alpha-D-ribose 1-diphosphate is bound at residue Asp-203.

It belongs to the UPRTase family. Mg(2+) is required as a cofactor.

The enzyme catalyses UMP + diphosphate = 5-phospho-alpha-D-ribose 1-diphosphate + uracil. It participates in pyrimidine metabolism; UMP biosynthesis via salvage pathway; UMP from uracil: step 1/1. With respect to regulation, allosterically activated by GTP. Functionally, catalyzes the conversion of uracil and 5-phospho-alpha-D-ribose 1-diphosphate (PRPP) to UMP and diphosphate. The protein is Uracil phosphoribosyltransferase of Bifidobacterium longum subsp. infantis (strain ATCC 15697 / DSM 20088 / JCM 1222 / NCTC 11817 / S12).